A 194-amino-acid polypeptide reads, in one-letter code: 7-methyl-GTP pyrophosphatase (194 aa).

Asp-69 (proton acceptor) is an active-site residue.

Belongs to the Maf family. YceF subfamily. A divalent metal cation is required as a cofactor.

It localises to the cytoplasm. It catalyses the reaction N(7)-methyl-GTP + H2O = N(7)-methyl-GMP + diphosphate + H(+). Functionally, nucleoside triphosphate pyrophosphatase that hydrolyzes 7-methyl-GTP (m(7)GTP). May have a dual role in cell division arrest and in preventing the incorporation of modified nucleotides into cellular nucleic acids. The sequence is that of 7-methyl-GTP pyrophosphatase (yceF1) from Salmonella paratyphi A (strain ATCC 9150 / SARB42).